A 115-amino-acid polypeptide reads, in one-letter code: Splicing factor 3B subunit 6-like protein (115 aa).

Residues 9-22 form an interaction with pre-mRNA branch site region; the sequence is EVNSILFIKNLSFK. An RRM domain is found at 12-87; it reads SILFIKNLSF…RYLVVHYYNP (76 aa).

It localises to the nucleus. Its function is as follows. Necessary for the splicing of pre-mRNA. In Schizosaccharomyces pombe (strain 972 / ATCC 24843) (Fission yeast), this protein is Splicing factor 3B subunit 6-like protein.